Here is a 127-residue protein sequence, read N- to C-terminus: Large ribosomal subunit protein bL17 (127 aa).

This sequence belongs to the bacterial ribosomal protein bL17 family. As to quaternary structure, part of the 50S ribosomal subunit. Contacts protein L32.

The chain is Large ribosomal subunit protein bL17 from Levilactobacillus brevis (strain ATCC 367 / BCRC 12310 / CIP 105137 / JCM 1170 / LMG 11437 / NCIMB 947 / NCTC 947) (Lactobacillus brevis).